The chain runs to 222 residues: Protein SHI RELATED SEQUENCE 4 (222 aa).

Residues cysteine 72, cysteine 75, cysteine 83, cysteine 88, cysteine 92, and cysteine 99 each coordinate Zn(2+). Positions 72–99 (CQECGNQAKKGCTHGRCRTCCKSNGLHC) form a DNA-binding region, zn(2)-C6 fungal-type; degenerate. Residues 114-137 (RERQQQLQTPTSNPTGGSGRVGKY) are disordered. Residues 118-128 (QQLQTPTSNPT) are compositionally biased toward polar residues. The Required for homo- and heterodimerization motif lies at 191–194 (IAGH).

The protein belongs to the SHI protein family. As to expression, expressed in cotyledon tips, leaf primordia, hydathodes, stipules, and lateral root primordia and weakly at the edges of petals and sepals.

It localises to the nucleus. Transcription activator that binds DNA on 5'-ACTCTAC-3' and promotes auxin homeostasis-regulating gene expression (e.g. YUC genes), as well as genes affecting stamen development, cell expansion and timing of flowering. Synergistically with other SHI-related proteins, regulates gynoecium, stamen and leaf development in a dose-dependent manner, controlling apical-basal patterning. Promotes style and stigma formation, and influences vascular development during gynoecium development. May also have a role in the formation and/or maintenance of the shoot apical meristem (SAM). The protein is Protein SHI RELATED SEQUENCE 4 (SRS4) of Arabidopsis thaliana (Mouse-ear cress).